The following is a 290-amino-acid chain: 2-dehydro-3-deoxyphosphooctonate aldolase 1 (290 aa).

Residue Ala-2 is modified to N-acetylalanine.

The protein belongs to the KdsA family. In terms of tissue distribution, expressed in shoots.

The protein resides in the cytoplasm. The catalysed reaction is D-arabinose 5-phosphate + phosphoenolpyruvate + H2O = 3-deoxy-alpha-D-manno-2-octulosonate-8-phosphate + phosphate. Its function is as follows. Catalyzes the stereospecific condensation of D-arabinose 5-phosphate and phosphoenolpyruvate to form 3-deoxy-D-manno-octulosonate 8-phosphate (KDO-8-phosphate) and inorganic phosphate. Involved in the biosynthesis of 3-deoxy-D-manno-octulosonate (KDO) which is an indispensable component of rhamnogalacturonan II (RG-II), a structurally complex pectic polysaccharide of the primary cell wall. RG-II is essential for the cell wall integrity of rapidly growing tissues and pollen tube growth and elongation. This is 2-dehydro-3-deoxyphosphooctonate aldolase 1 (KDSA1) from Arabidopsis thaliana (Mouse-ear cress).